A 542-amino-acid polypeptide reads, in one-letter code: Beta-fructofuranosidase, insoluble isoenzyme 5 (542 aa).

Residues 50-53, Gln69, Trp77, and 114-115 each bind substrate; these read WQND and WS. Residue Asp53 is part of the active site. A glycan (N-linked (GlcNAc...) asparagine) is linked at Asn142. Substrate is bound by residues 178-179 and Glu233; that span reads RD. A disulfide bond links Cys389 and Cys436. N-linked (GlcNAc...) asparagine glycosylation is found at Asn510 and Asn516.

It belongs to the glycosyl hydrolase 32 family. Expressed in roots and leaves.

The protein resides in the secreted. The protein localises to the extracellular space. Its subcellular location is the apoplast. It localises to the cell wall. It carries out the reaction Hydrolysis of terminal non-reducing beta-D-fructofuranoside residues in beta-D-fructofuranosides.. In terms of biological role, may play a role in stress response. The protein is Beta-fructofuranosidase, insoluble isoenzyme 5 (CIN5) of Oryza sativa subsp. japonica (Rice).